A 68-amino-acid chain; its full sequence is TxMMSK-03 (68 aa).

The signal sequence occupies residues 1–19 (MSKLGALLIICLLLFPLTA). The propeptide occupies 20–50 (VPMDGDQPADRPAERMQDDISFEQHPMFDAT). Disulfide bonds link Cys53–Cys67, Cys54–Cys63, and Cys59–Cys66. Pro65 carries the post-translational modification 4-hydroxyproline; partial.

Contains 3 disulfide bonds. In terms of tissue distribution, expressed by the venom duct. Both hydroxylated and non-hydroxylated forms are mostly and only present in part 2 (proximal of the venom bulb) of the venom duct, respectively.

The protein localises to the secreted. The chain is TxMMSK-03 from Conus textile (Cloth-of-gold cone).